A 179-amino-acid chain; its full sequence is Probable WRKY transcription factor 24 (179 aa).

Residues 92 to 157 (SDDDVLDDGY…YEGVHNHPCE (66 aa)) constitute a DNA-binding region (WRKY).

Belongs to the WRKY group II-c family.

It localises to the nucleus. In terms of biological role, transcription factor. Interacts specifically with the W box (5'-(T)TGAC[CT]-3'), a frequently occurring elicitor-responsive cis-acting element. The chain is Probable WRKY transcription factor 24 (WRKY24) from Arabidopsis thaliana (Mouse-ear cress).